A 169-amino-acid chain; its full sequence is Sec-independent protein translocase protein TatB (169 aa).

Residues 1-21 traverse the membrane as a helical segment; sequence MFDIGFLELAVIAVIGLIVIG. Residues 98-169 are disordered; it reads EAEEAKLQTP…TTKTEPANDR (72 aa). Residues 134–143 show a composition bias toward basic and acidic residues; it reads PPEEPSKVEA. The span at 146-169 shows a compositional bias: polar residues; the sequence is SAETPQANNQDQQPTTKTEPANDR.

Belongs to the TatB family. In terms of assembly, the Tat system comprises two distinct complexes: a TatABC complex, containing multiple copies of TatA, TatB and TatC subunits, and a separate TatA complex, containing only TatA subunits. Substrates initially bind to the TatABC complex, which probably triggers association of the separate TatA complex to form the active translocon.

It localises to the cell inner membrane. Functionally, part of the twin-arginine translocation (Tat) system that transports large folded proteins containing a characteristic twin-arginine motif in their signal peptide across membranes. Together with TatC, TatB is part of a receptor directly interacting with Tat signal peptides. TatB may form an oligomeric binding site that transiently accommodates folded Tat precursor proteins before their translocation. This is Sec-independent protein translocase protein TatB from Saccharophagus degradans (strain 2-40 / ATCC 43961 / DSM 17024).